The following is a 282-amino-acid chain: Putative 1-acyl-sn-glycerol-3-phosphate acyltransferase acl-2 (282 aa).

2 helical membrane passes run 4-24 (FWSI…NIST) and 32-52 (ISFY…TMIP). An HXXXXD motif motif is present at residues 98–103 (HQSSLD). The helical transmembrane segment at 122–142 (ILAYVPFFNLGAYFSNTIFID) threads the bilayer.

The protein belongs to the 1-acyl-sn-glycerol-3-phosphate acyltransferase family.

It is found in the membrane. It catalyses the reaction a 1-acyl-sn-glycero-3-phosphate + an acyl-CoA = a 1,2-diacyl-sn-glycero-3-phosphate + CoA. It participates in phospholipid metabolism; CDP-diacylglycerol biosynthesis; CDP-diacylglycerol from sn-glycerol 3-phosphate: step 2/3. Its function is as follows. Converts lysophosphatidic acid (LPA) into phosphatidic acid by incorporating an acyl moiety at the sn-2 position of the glycerol backbone. This chain is Putative 1-acyl-sn-glycerol-3-phosphate acyltransferase acl-2 (acl-2), found in Caenorhabditis elegans.